A 62-amino-acid chain; its full sequence is Large ribosomal subunit protein bL28 (62 aa).

The disordered stretch occupies residues 1 to 26; sequence MARKCYVTGKSPKSGNNRSHALNKTK. Over residues 11–20 the composition is skewed to polar residues; it reads SPKSGNNRSH.

Belongs to the bacterial ribosomal protein bL28 family.

The chain is Large ribosomal subunit protein bL28 from Exiguobacterium sp. (strain ATCC BAA-1283 / AT1b).